The chain runs to 284 residues: uncharacterized protein (284 aa).

A C3H1-type zinc finger spans residues N37–S65.

This is an uncharacterized protein from Acanthamoeba polyphaga (Amoeba).